The sequence spans 288 residues: Histone-lysine N-methyltransferase Suv4-20 (288 aa).

The SET domain occupies 128–238 (QECKRYSQEG…PGDEITCFYG (111 aa)).

Belongs to the class V-like SAM-binding methyltransferase superfamily. Histone-lysine methyltransferase family. Suvar4-20 subfamily.

The protein localises to the nucleus. The protein resides in the chromosome. It catalyses the reaction N(6)-methyl-L-lysyl(20)-[histone H4] + S-adenosyl-L-methionine = N(6),N(6)-dimethyl-L-lysyl(20)-[histone H4] + S-adenosyl-L-homocysteine + H(+). The catalysed reaction is N(6),N(6)-dimethyl-L-lysyl(20)-[histone H4] + S-adenosyl-L-methionine = N(6),N(6),N(6)-trimethyl-L-lysyl(20)-[histone H4] + S-adenosyl-L-homocysteine + H(+). Histone methyltransferase that specifically di- and trimethylates 'Lys-20' of histone H4 (H4K20me2/me3). H4 'Lys-20' trimethylation represents a specific tag for epigenetic transcriptional repression. Contributes to dosage compensation of X chromosome-relative to autosome-linked gene expression, possibly by converting H4K20me1 to H4K20m2/me3 on autosomes. Involved in the regulation of growth and body fat metabolism downstream of the TOR complex 2 pathway. The sequence is that of Histone-lysine N-methyltransferase Suv4-20 (set-4) from Caenorhabditis elegans.